A 745-amino-acid chain; its full sequence is Cellulose synthase 1 catalytic subunit [UDP-forming] (745 aa).

3 helical membrane-spanning segments follow: residues 29 to 49 (YVVG…TLSL), 106 to 126 (GILG…LFLS), and 153 to 173 (IFIP…LGAL). The catalytic subdomain A stretch occupies residues 147–240 (EWPTVDIFIP…HILILDCDHI (94 aa)). Asp-189 is an active-site residue. Asp-236 and Asp-238 together coordinate substrate. Positions 317-377 (KAIEEIGGFA…GQRMRWARGM (61 aa)) are catalytic subdomain B. The active site involves Asp-333. 6 helical membrane-spanning segments follow: residues 407-427 (FFFA…LFFS), 430-450 (IIAA…FHSI), 468-488 (VYET…MLFP), 515-535 (NIIF…ALIF), 547-567 (ALNC…ISVG), and 649-669 (AVFT…RFVF). Residues 572-670 (QLRQSHRIEA…EAAVVRFVFG (99 aa)) enclose the PilZ domain. Positions 708 to 717 (IAHSRPKKKP) are enriched in basic residues. The segment at 708–745 (IAHSRPKKKPIALPVERREPTTSQGGQKQEGKISRAAS) is disordered. The segment covering 736–745 (QEGKISRAAS) has biased composition (basic and acidic residues).

Belongs to the glycosyltransferase 2 family. The cofactor is Mg(2+).

It is found in the cell inner membrane. It catalyses the reaction [(1-&gt;4)-beta-D-glucosyl](n) + UDP-alpha-D-glucose = [(1-&gt;4)-beta-D-glucosyl](n+1) + UDP + H(+). Its pathway is glycan metabolism; bacterial cellulose biosynthesis. Its activity is regulated as follows. Activated by bis-(3'-5') cyclic diguanylic acid (c-di-GMP). Functionally, catalytic subunit of cellulose synthase. It polymerizes uridine 5'-diphosphate glucose to cellulose. The thick cellulosic mats generated by this enzyme probably provide a specialized protective environment to the bacterium. The chain is Cellulose synthase 1 catalytic subunit [UDP-forming] (bcsAI) from Komagataeibacter xylinus (Gluconacetobacter xylinus).